The chain runs to 411 residues: Adenylosuccinate synthetase (411 aa).

Residues 11 to 17 (GDEGKGK) and 39 to 41 (GHT) contribute to the GTP site. The Proton acceptor role is filled by Asp12. Mg(2+) is bound by residues Asp12 and Gly39. Residues 12 to 15 (DEGK), 37 to 40 (NAGH), Thr121, Arg135, Gln215, Thr230, and Arg294 contribute to the IMP site. The active-site Proton donor is His40. A substrate-binding site is contributed by 290 to 296 (TTTKRPR). GTP contacts are provided by residues Arg296, 322–324 (KLD), and 400–402 (STS).

This sequence belongs to the adenylosuccinate synthetase family. In terms of assembly, homodimer. Mg(2+) serves as cofactor.

Its subcellular location is the cytoplasm. It carries out the reaction IMP + L-aspartate + GTP = N(6)-(1,2-dicarboxyethyl)-AMP + GDP + phosphate + 2 H(+). It functions in the pathway purine metabolism; AMP biosynthesis via de novo pathway; AMP from IMP: step 1/2. Its function is as follows. Plays an important role in the de novo pathway of purine nucleotide biosynthesis. Catalyzes the first committed step in the biosynthesis of AMP from IMP. The chain is Adenylosuccinate synthetase from Helicobacter pylori (strain Shi470).